A 62-amino-acid chain; its full sequence is MEIIALLIEEGIIIIKDKKVAERFLKDLESSQGMDWKEIRERAERAKKQLEEGIEWAKKTKL.

This is an uncharacterized protein from Methanocaldococcus jannaschii (strain ATCC 43067 / DSM 2661 / JAL-1 / JCM 10045 / NBRC 100440) (Methanococcus jannaschii).